The following is a 486-amino-acid chain: Deleted in azoospermia protein 3 (486 aa).

Positions 1–10 (MSAANPETPN) are enriched in polar residues. Residues 1-27 (MSAANPETPNSTISREASTQSSSAAAS) form a disordered region. Residues 11-27 (STISREASTQSSSAAAS) show a composition bias toward low complexity. The RRM domain occupies 40 to 115 (NTVFVGGIDA…KKLKLGPAIR (76 aa)). DAZ domains lie at 167–190 (AYSA…YNYQ), 191–214 (EYPT…YNYQ), 215–238 (PFPA…YNYQ), 239–262 (AFPA…YNYQ), 263–286 (PFPA…YNYQ), 287–310 (AFPA…YNYQ), 311–334 (AFPA…YNYQ), 335–358 (AFPA…YNYQ), 359–382 (AFPA…YNYQ), 383–406 (AFPA…YNYQ), 407–430 (AFPA…YNYQ), and 431–454 (AFPA…YNYQ).

The protein belongs to the RRM DAZ family. As to quaternary structure, forms a heterodimer with BOLL and DAZL. Interacts with PUM2, DAZAP1, DAZAP2, DZIP1 and DZIP3. In terms of tissue distribution, testis specific.

The protein resides in the cytoplasm. It is found in the nucleus. Functionally, RNA-binding protein that plays an essential role in spermatogenesis. May act by binding to the 3'-UTR of mRNAs and regulating their translation. This Homo sapiens (Human) protein is Deleted in azoospermia protein 3 (DAZ3).